The following is a 353-amino-acid chain: Phosphate acyltransferase (353 aa).

It belongs to the PlsX family. As to quaternary structure, homodimer. Probably interacts with PlsY.

It localises to the cytoplasm. The enzyme catalyses a fatty acyl-[ACP] + phosphate = an acyl phosphate + holo-[ACP]. It functions in the pathway lipid metabolism; phospholipid metabolism. Its function is as follows. Catalyzes the reversible formation of acyl-phosphate (acyl-PO(4)) from acyl-[acyl-carrier-protein] (acyl-ACP). This enzyme utilizes acyl-ACP as fatty acyl donor, but not acyl-CoA. This Agrobacterium fabrum (strain C58 / ATCC 33970) (Agrobacterium tumefaciens (strain C58)) protein is Phosphate acyltransferase.